The sequence spans 412 residues: Alanyl-tRNA editing protein Aarsd1-B (412 aa).

His-108, His-112, Cys-208, and His-212 together coordinate Zn(2+).

It belongs to the class-II aminoacyl-tRNA synthetase family. Alax-L subfamily. Requires Zn(2+) as cofactor.

It is found in the cytoplasm. In terms of biological role, functions in trans to edit the amino acid moiety from incorrectly charged tRNA(Ala). The chain is Alanyl-tRNA editing protein Aarsd1-B (aarsd1-b) from Xenopus laevis (African clawed frog).